Reading from the N-terminus, the 376-residue chain is Phosphatidylinositol/phosphatidylcholine transfer protein SFH11 (376 aa).

The span at 1-20 (MQETDRDIHISDGTMNKEEQ) shows a compositional bias: basic and acidic residues. Residues 1–24 (MQETDRDIHISDGTMNKEEQSPNN) are disordered. The CRAL-TRIO domain maps to 92-266 (EYGEVKKHYP…FLGGNCTCSD (175 aa)). Positions 323 to 357 (MEKYAALKTAVKDSQKRIEMLEISLHETKKVLNGL) form a coiled coil.

Belongs to the SFH family.

It is found in the golgi apparatus membrane. The protein resides in the cell membrane. In terms of biological role, required for transport of secretory proteins from the Golgi complex. Catalyzes the transfer of phosphatidylinositol and phosphatidylcholine between membranes in vitro. This is Phosphatidylinositol/phosphatidylcholine transfer protein SFH11 (SFH11) from Arabidopsis thaliana (Mouse-ear cress).